Here is a 145-residue protein sequence, read N- to C-terminus: Putative pre-16S rRNA nuclease (145 aa).

The protein belongs to the YqgF nuclease family.

The protein resides in the cytoplasm. Its function is as follows. Could be a nuclease involved in processing of the 5'-end of pre-16S rRNA. This chain is Putative pre-16S rRNA nuclease, found in Thiobacillus denitrificans (strain ATCC 25259 / T1).